The chain runs to 204 residues: Large ribosomal subunit protein uL4 (204 aa).

The disordered stretch occupies residues 49 to 76 (KTKGISDVSGTTAKPYGQKRTGRARQGS).

The protein belongs to the universal ribosomal protein uL4 family. Part of the 50S ribosomal subunit.

In terms of biological role, one of the primary rRNA binding proteins, this protein initially binds near the 5'-end of the 23S rRNA. It is important during the early stages of 50S assembly. It makes multiple contacts with different domains of the 23S rRNA in the assembled 50S subunit and ribosome. Its function is as follows. Forms part of the polypeptide exit tunnel. The sequence is that of Large ribosomal subunit protein uL4 from Wolbachia pipientis wMel.